Here is a 101-residue protein sequence, read N- to C-terminus: Large ribosomal subunit protein uL23 (101 aa).

Belongs to the universal ribosomal protein uL23 family. As to quaternary structure, part of the 50S ribosomal subunit. Contacts protein L29, and trigger factor when it is bound to the ribosome.

Its function is as follows. One of the early assembly proteins it binds 23S rRNA. One of the proteins that surrounds the polypeptide exit tunnel on the outside of the ribosome. Forms the main docking site for trigger factor binding to the ribosome. This is Large ribosomal subunit protein uL23 from Lactobacillus helveticus (strain DPC 4571).